The primary structure comprises 903 residues: Disintegrin and metalloproteinase domain-containing protein 12 (903 aa).

A signal peptide spans 1–31 (MAERPARRAPPARALLLALAGALLAPRAARG). A propeptide spanning residues 32-205 (MSLWDQRGTY…SQMRARRHKR (174 aa)) is cleaved from the precursor. Residues Asn112, Asn147, and Asn157 are each glycosylated (N-linked (GlcNAc...) asparagine). Residues 175 to 182 (GLCGSQHN) carry the Cysteine switch motif. Cys177 lines the Zn(2+) pocket. N-linked (GlcNAc...) asparagine glycosylation is found at Asn182 and Asn185. The Extracellular portion of the chain corresponds to 206–706 (ETLKMTKYVE…GPIRQADNQG (501 aa)). One can recognise a Peptidase M12B domain in the interval 212 to 414 (KYVELVIVAD…GMGMCLFNLP (203 aa)). 3 disulfides stabilise this stretch: Cys323/Cys409, Cys365/Cys393, and Cys367/Cys376. Position 348 (His348) interacts with Zn(2+). Glu349 is an active-site residue. Zn(2+) is bound by residues His352 and His358. The 87-residue stretch at 422 to 508 (GRKCGNGYVE…HCPANVYLHD (87 aa)) folds into the Disintegrin domain. The N-linked (GlcNAc...) asparagine glycan is linked to Asn450. Cys480 and Cys500 form a disulfide bridge. Asn649 carries N-linked (GlcNAc...) asparagine glycosylation. Positions 654-686 (GVHKCAMQCHGRGVCNNRKNCHCEAHWAPPFCD) constitute an EGF-like domain. Cystine bridges form between Cys658-Cys668, Cys662-Cys674, and Cys676-Cys685. Residues 707–727 (LTVGILVSILCLLAAGFVVYL) form a helical membrane-spanning segment. The Cytoplasmic segment spans residues 728 to 903 (KRKTLMRLLF…PRPSHNAYIK (176 aa)). Disordered regions lie at residues 753–790 (SRTPSGPHLGQAHHTPGKGLLMNRAPHFNTPKDRHSLK) and 819–903 (HQTP…AYIK). Short sequence motifs (SH3-binding; class II) lie at residues 824–830 (APSGPAR) and 846–852 (KPSPPQK). 3 consecutive short sequence motifs (SH3-binding; class I) follow at residues 830–837 (RPLPASPA), 852–858 (KPLPADP), and 881–887 (RPAPIRP). The span at 847–856 (PSPPQKPLPA) shows a compositional bias: pro residues. Phosphotyrosine; by SRC is present on Tyr901.

In terms of assembly, interacts with alpha-actinin-2 and with syndecans. Interacts with SH3PXD2A. Interacts with FST3. Interacts with RACK1; the interaction is required for PKC-dependent translocation of ADAM12 to the cell membrane. The cofactor is Zn(2+). In terms of processing, the precursor is cleaved by a furin endopeptidase. In terms of tissue distribution, expressed during early developing mesenchymal cells that give rise to skeletal muscle, bones and visceral organs. Not expressed in adult normal muscle but expressed in regenerating muscle.

The protein resides in the membrane. Involved in skeletal muscle regeneration, specifically at the onset of cell fusion. Also involved in macrophage-derived giant cells (MGC) and osteoclast formation from mononuclear precursors. In Mus musculus (Mouse), this protein is Disintegrin and metalloproteinase domain-containing protein 12 (Adam12).